Consider the following 145-residue polypeptide: Deoxyuridine 5'-triphosphate nucleotidohydrolase (145 aa).

Residues 63–65, Asn76, 80–82, and Lys90 each bind substrate; these read RSG and TID.

This sequence belongs to the dUTPase family. Mg(2+) serves as cofactor.

The catalysed reaction is dUTP + H2O = dUMP + diphosphate + H(+). It participates in pyrimidine metabolism; dUMP biosynthesis; dUMP from dCTP (dUTP route): step 2/2. Functionally, this enzyme is involved in nucleotide metabolism: it produces dUMP, the immediate precursor of thymidine nucleotides and it decreases the intracellular concentration of dUTP so that uracil cannot be incorporated into DNA. The chain is Deoxyuridine 5'-triphosphate nucleotidohydrolase from Clostridium acetobutylicum (strain ATCC 824 / DSM 792 / JCM 1419 / IAM 19013 / LMG 5710 / NBRC 13948 / NRRL B-527 / VKM B-1787 / 2291 / W).